The following is a 274-amino-acid chain: MFEKITEQPSLYDRLEEKSTREILEDINREDRKVAEAVSRTIPMIERLVEQIVPRMEQGGRLFYMGAGTSGRLGVLDASEIPPTFGMPPTFVIGLIAGGDRALRNPVEKAEDNTERGWEELLSHGVNSSDTVIGIAASGTTPYVIGALREARRHGILTGCICSNIGSPLAAEADYPIEVIVGPEYVTGSSRMKSGTAQKMILNMISTSIMIRLGRVKGNRMVNMQLSNNKLIDRGTRMLMSEFDLSYEDARTLLLRHGSVRIASESMKQKPPKK.

Positions isoleucine 52 to arginine 215 constitute an SIS domain. The Proton donor role is filled by glutamate 80. Residue glutamate 111 is part of the active site.

It belongs to the GCKR-like family. MurNAc-6-P etherase subfamily. Homodimer.

The catalysed reaction is N-acetyl-D-muramate 6-phosphate + H2O = N-acetyl-D-glucosamine 6-phosphate + (R)-lactate. It participates in amino-sugar metabolism; N-acetylmuramate degradation. In terms of biological role, specifically catalyzes the cleavage of the D-lactyl ether substituent of MurNAc 6-phosphate, producing GlcNAc 6-phosphate and D-lactate. This is N-acetylmuramic acid 6-phosphate etherase from Porphyromonas gingivalis (strain ATCC 33277 / DSM 20709 / CIP 103683 / JCM 12257 / NCTC 11834 / 2561).